The primary structure comprises 210 residues: Uracil phosphoribosyltransferase (210 aa).

Residues Arg-77, Arg-102, and 129-137 (DPMLATGAS) each bind 5-phospho-alpha-D-ribose 1-diphosphate. Residues Ile-195 and 200–202 (GDA) contribute to the uracil site. Asp-201 contributes to the 5-phospho-alpha-D-ribose 1-diphosphate binding site.

The protein belongs to the UPRTase family. Requires Mg(2+) as cofactor.

The enzyme catalyses UMP + diphosphate = 5-phospho-alpha-D-ribose 1-diphosphate + uracil. It functions in the pathway pyrimidine metabolism; UMP biosynthesis via salvage pathway; UMP from uracil: step 1/1. Allosterically activated by GTP. Functionally, catalyzes the conversion of uracil and 5-phospho-alpha-D-ribose 1-diphosphate (PRPP) to UMP and diphosphate. This chain is Uracil phosphoribosyltransferase, found in Mycoplasmoides gallisepticum (strain R(low / passage 15 / clone 2)) (Mycoplasma gallisepticum).